Reading from the N-terminus, the 626-residue chain is Putative Xaa-Pro dipeptidyl-peptidase (626 aa).

Catalysis depends on charge relay system residues Ser-231, Asp-348, and His-379.

It belongs to the peptidase S15 family.

It carries out the reaction Hydrolyzes Xaa-Pro-|- bonds to release unblocked, N-terminal dipeptides from substrates including Ala-Pro-|-p-nitroanilide and (sequentially) Tyr-Pro-|-Phe-Pro-|-Gly-Pro-|-Ile.. The polypeptide is Putative Xaa-Pro dipeptidyl-peptidase (Rhodopirellula baltica (strain DSM 10527 / NCIMB 13988 / SH1)).